Reading from the N-terminus, the 356-residue chain is Nicotinate-nucleotide--dimethylbenzimidazole phosphoribosyltransferase (356 aa).

Glutamate 317 (proton acceptor) is an active-site residue.

It belongs to the CobT family. In terms of assembly, homodimer.

It carries out the reaction 5,6-dimethylbenzimidazole + nicotinate beta-D-ribonucleotide = alpha-ribazole 5'-phosphate + nicotinate + H(+). It functions in the pathway nucleoside biosynthesis; alpha-ribazole biosynthesis; alpha-ribazole from 5,6-dimethylbenzimidazole: step 1/2. Functionally, catalyzes the synthesis of alpha-ribazole-5'-phosphate from nicotinate mononucleotide (NAMN) and 5,6-dimethylbenzimidazole (DMB). The protein is Nicotinate-nucleotide--dimethylbenzimidazole phosphoribosyltransferase of Salmonella gallinarum (strain 287/91 / NCTC 13346).